A 185-amino-acid polypeptide reads, in one-letter code: Large ribosomal subunit protein bL25 (185 aa).

Belongs to the bacterial ribosomal protein bL25 family. CTC subfamily. As to quaternary structure, part of the 50S ribosomal subunit; part of the 5S rRNA/L5/L18/L25 subcomplex. Contacts the 5S rRNA. Binds to the 5S rRNA independently of L5 and L18.

Its function is as follows. This is one of the proteins that binds to the 5S RNA in the ribosome where it forms part of the central protuberance. The polypeptide is Large ribosomal subunit protein bL25 (Chlamydia muridarum (strain MoPn / Nigg)).